The chain runs to 590 residues: Hyaluronan synthase 1 (590 aa).

The Cytoplasmic segment spans residues 1–31 (MKDKAAATMEIPEDPGIPKNLERKRPIVWRM). The chain crosses the membrane as a helical span at residues 32-52 (IYYSFAVLLLAAFTAAYVTEF). The Extracellular segment spans residues 53-60 (QILTHEDV). A helical transmembrane segment spans residues 61–81 (LFSLGLYGLVMFLHLMMQSLF). Over 82–401 (AYLEIRRINK…YNAQWWYKHH (320 aa)) the chain is Cytoplasmic. The chain crosses the membrane as a helical span at residues 402–422 (IWMTYESVVHFIFPFFITATV). The Extracellular segment spans residues 423–425 (IRL). A helical transmembrane segment spans residues 426-446 (LYASTIWNVVWLLLCIQIMSV). Residues 447 to 456 (LKSLYACWLR) lie on the Cytoplasmic side of the membrane. A helical membrane pass occupies residues 457–477 (GNPIMLLMSLYSMLYMTGLLP). Over 478-505 (SKYFAMLTINKSGWGTSGRKKIVGNYMP) the chain is Extracellular. Residues 506–526 (VLPLSIWMAVLCGGVGYSIYM) form a helical membrane-spanning segment. The Cytoplasmic portion of the chain corresponds to 527 to 543 (DCHQDWSTPEKQKELYH). The helical transmembrane segment at 544–564 (LLYGCISYTLYWVLMALMYWV) threads the bilayer. Topologically, residues 565–588 (WVKRCCRKRSQTVTLVHDIPERLV) are extracellular.

This sequence belongs to the NodC/HAS family. Mg(2+) is required as a cofactor.

It is found in the membrane. It carries out the reaction [hyaluronan](n) + UDP-N-acetyl-alpha-D-glucosamine = N-acetyl-beta-D-glucosaminyl-(1-&gt;4)-[hyaluronan](n) + UDP + H(+). The enzyme catalyses N-acetyl-beta-D-glucosaminyl-(1-&gt;4)-[hyaluronan](n) + UDP-alpha-D-glucuronate = [hyaluronan](n+1) + UDP + H(+). It functions in the pathway glycan biosynthesis; hyaluronan biosynthesis. Its function is as follows. Catalyzes the addition of GlcNAc or GlcUA monosaccharides to the nascent hyaluronan polymer. Therefore, it is essential to hyaluronan synthesis a major component of most extracellular matrices that has a structural role in tissues architectures and regulates cell adhesion, migration and differentiation. Also able to catalyze the synthesis of chito-oligosaccharide depending on the substrate. This Xenopus tropicalis (Western clawed frog) protein is Hyaluronan synthase 1 (has1).